The primary structure comprises 86 residues: Large ribosomal subunit protein bL31 (86 aa).

The interval 65 to 86 (YRMASSDSSEQKDKSSEEKKES) is disordered. The span at 73–86 (SEQKDKSSEEKKES) shows a compositional bias: basic and acidic residues.

Belongs to the bacterial ribosomal protein bL31 family. Type A subfamily. As to quaternary structure, part of the 50S ribosomal subunit.

In terms of biological role, binds the 23S rRNA. This Prochlorococcus marinus (strain NATL1A) protein is Large ribosomal subunit protein bL31.